We begin with the raw amino-acid sequence, 959 residues long: Lon protease homolog, mitochondrial (959 aa).

Residues 1–67 constitute a mitochondrion transit peptide; sequence MAASTGYVRL…GPAIGGQWRG (67 aa). Disordered stretches follow at residues 77–102 and 218–257; these read GAFS…GSAG and RQLE…HPAE. Gly residues predominate over residues 91 to 102; that stretch reads EEGAGGAGGSAG. In terms of domain architecture, Lon N-terminal spans 124 to 370; it reads LPLIAITRNP…KALSLLKKEF (247 aa). The span at 233-243 shows a compositional bias: basic residues; the sequence is HKPRRKSKRGK. Basic and acidic residues predominate over residues 244–256; that stretch reads KEAEDELSARHPA. 523–530 is an ATP binding site; sequence GPPGVGKT. Positions 759–949 constitute a Lon proteolytic domain; the sequence is VTPPGVVMGL…REIFDIAFPD (191 aa). Residues S855 and K898 contribute to the active site.

This sequence belongs to the peptidase S16 family. As to quaternary structure, homohexamer. Organized in a ring with a central cavity. The ATP-binding and proteolytic domains (AP-domain) form a hexameric chamber, while the N-terminal domain is arranged as a trimer of dimers. DNA and RNA binding is stimulated by substrate and inhibited by ATP binding. Interacts with TWNK and mitochondrial DNA polymerase subunit POLG. In terms of tissue distribution, duodenum, heart, lung and liver, but not thymus.

Its subcellular location is the mitochondrion matrix. It catalyses the reaction Hydrolysis of proteins in presence of ATP.. Peptidase activity is subject to substrate inhibition by ATP. ATP-dependent serine protease that mediates the selective degradation of misfolded, unassembled or oxidatively damaged polypeptides as well as certain short-lived regulatory proteins in the mitochondrial matrix. Endogenous substrates include mitochondrial steroidogenic acute regulatory (StAR) protein, DELE1, helicase Twinkle (TWNK) and the large ribosomal subunit protein MRPL32/bL32m. MRPL32/bL32m is protected from degradation by LONP1 when it is bound to a nucleic acid (RNA), but TWNK is not. May also have a chaperone function in the assembly of inner membrane protein complexes. Participates in the regulation of mitochondrial gene expression and in the maintenance of the integrity of the mitochondrial genome. Binds to mitochondrial promoters and RNA in a single-stranded, site-specific, and strand-specific manner. May regulate mitochondrial DNA replication and/or gene expression using site-specific, single-stranded DNA binding to target the degradation of regulatory proteins binding to adjacent sites in mitochondrial promoters. The protein is Lon protease homolog, mitochondrial of Homo sapiens (Human).